The chain runs to 429 residues: Ribosomal RNA small subunit methyltransferase B (429 aa).

Residues 254–260 (CAAPGGK), aspartate 277, aspartate 303, and aspartate 322 each bind S-adenosyl-L-methionine. Cysteine 375 acts as the Nucleophile in catalysis.

Belongs to the class I-like SAM-binding methyltransferase superfamily. RsmB/NOP family.

The protein resides in the cytoplasm. It carries out the reaction cytidine(967) in 16S rRNA + S-adenosyl-L-methionine = 5-methylcytidine(967) in 16S rRNA + S-adenosyl-L-homocysteine + H(+). In terms of biological role, specifically methylates the cytosine at position 967 (m5C967) of 16S rRNA. This Yersinia pestis bv. Antiqua (strain Angola) protein is Ribosomal RNA small subunit methyltransferase B.